The following is a 161-amino-acid chain: Zinc metalloproteinase/disintegrin (161 aa).

A Peptidase M12B domain is found at glutamate 1 to histidine 72. Residue histidine 12 participates in Zn(2+) binding. Residue glutamate 13 is part of the active site. Positions 16 and 22 each coordinate Zn(2+). 2 cysteine pairs are disulfide-bonded: cysteine 27-cysteine 51 and cysteine 29-cysteine 34. Positions leucine 73–leucine 88 are excised as a propeptide. A Disintegrin domain is found at glutamate 89–alanine 161. 6 disulfide bridges follow: cysteine 94–cysteine 109, cysteine 96–cysteine 104, cysteine 103–cysteine 126, cysteine 117–cysteine 123, cysteine 122–cysteine 147, and cysteine 135–cysteine 154. The short motif at arginine 139–aspartate 141 is the Cell attachment site element.

The protein belongs to the venom metalloproteinase (M12B) family. P-II subfamily. P-IIa sub-subfamily. As to quaternary structure, monomer. In terms of tissue distribution, expressed by the venom gland.

It is found in the secreted. Its function is as follows. Impairs hemostasis in the envenomed animal. Disintegrin: inhibit platelet aggregation induced by ADP, thrombin, platelet-activating factor and collagen. Acts by inhibiting fibrinogen interaction with platelet receptors GPIIb/GPIIIa (ITGA2B/ITGB3). This chain is Zinc metalloproteinase/disintegrin, found in Bothrops jararaca (Jararaca).